The primary structure comprises 545 residues: Ribulokinase (545 aa).

It belongs to the ribulokinase family.

It carries out the reaction D-ribulose + ATP = D-ribulose 5-phosphate + ADP + H(+). The catalysed reaction is L-ribulose + ATP = L-ribulose 5-phosphate + ADP + H(+). It participates in carbohydrate degradation; L-arabinose degradation via L-ribulose; D-xylulose 5-phosphate from L-arabinose (bacterial route): step 2/3. The chain is Ribulokinase from Staphylococcus aureus (strain MRSA252).